The chain runs to 388 residues: LL-diaminopimelate aminotransferase (388 aa).

The substrate site is built by tyrosine 16 and glycine 41. Pyridoxal 5'-phosphate is bound by residues tyrosine 70, serine 104 to lysine 105, tyrosine 129, asparagine 179, tyrosine 210, and serine 239 to serine 241. 3 residues coordinate substrate: lysine 105, tyrosine 129, and asparagine 179. Lysine 242 is subject to N6-(pyridoxal phosphate)lysine. Arginine 250 contacts pyridoxal 5'-phosphate. Arginine 368 provides a ligand contact to substrate.

It belongs to the class-I pyridoxal-phosphate-dependent aminotransferase family. LL-diaminopimelate aminotransferase subfamily. As to quaternary structure, homodimer. Pyridoxal 5'-phosphate serves as cofactor.

The catalysed reaction is (2S,6S)-2,6-diaminopimelate + 2-oxoglutarate = (S)-2,3,4,5-tetrahydrodipicolinate + L-glutamate + H2O + H(+). Its pathway is amino-acid biosynthesis; L-lysine biosynthesis via DAP pathway; LL-2,6-diaminopimelate from (S)-tetrahydrodipicolinate (aminotransferase route): step 1/1. In terms of biological role, involved in the synthesis of meso-diaminopimelate (m-DAP or DL-DAP), required for both lysine and peptidoglycan biosynthesis. Catalyzes the direct conversion of tetrahydrodipicolinate to LL-diaminopimelate. The protein is LL-diaminopimelate aminotransferase of Nitratidesulfovibrio vulgaris (strain ATCC 29579 / DSM 644 / CCUG 34227 / NCIMB 8303 / VKM B-1760 / Hildenborough) (Desulfovibrio vulgaris).